The primary structure comprises 932 residues: DNA mismatch repair protein MutS (932 aa).

Residue 615–622 coordinates ATP; it reads GPNMAGKS.

Belongs to the DNA mismatch repair MutS family.

Functionally, this protein is involved in the repair of mismatches in DNA. It is possible that it carries out the mismatch recognition step. This protein has a weak ATPase activity. The chain is DNA mismatch repair protein MutS from Clostridium botulinum (strain Hall / ATCC 3502 / NCTC 13319 / Type A).